A 143-amino-acid chain; its full sequence is Ribosome-binding factor A (143 aa).

The segment at 123–143 is disordered; the sequence is DKSLQENYKQNDKETKAEKLR.

This sequence belongs to the RbfA family. In terms of assembly, monomer. Binds 30S ribosomal subunits, but not 50S ribosomal subunits or 70S ribosomes.

The protein resides in the cytoplasm. Its function is as follows. One of several proteins that assist in the late maturation steps of the functional core of the 30S ribosomal subunit. Associates with free 30S ribosomal subunits (but not with 30S subunits that are part of 70S ribosomes or polysomes). Required for efficient processing of 16S rRNA. May interact with the 5'-terminal helix region of 16S rRNA. The sequence is that of Ribosome-binding factor A from Francisella tularensis subsp. mediasiatica (strain FSC147).